A 173-amino-acid polypeptide reads, in one-letter code: Dirigent protein 8 (173 aa).

The N-terminal stretch at Met-1–Gly-22 is a signal peptide. Asn-69, Asn-90, and Asn-125 each carry an N-linked (GlcNAc...) asparagine glycan.

The protein belongs to the plant dirigent protein family. As to quaternary structure, homodimer.

The protein resides in the secreted. The protein localises to the extracellular space. It localises to the apoplast. Dirigent proteins impart stereoselectivity on the phenoxy radical-coupling reaction, yielding optically active lignans from two molecules of coniferyl alcohol in the biosynthesis of lignans, flavonolignans, and alkaloids and thus plays a central role in plant secondary metabolism. This chain is Dirigent protein 8 (DIR8), found in Arabidopsis thaliana (Mouse-ear cress).